The following is a 192-amino-acid chain: Peptide deformylase (192 aa).

Residues Cys102 and His145 each coordinate Fe cation. Residue Glu146 is part of the active site. His149 contributes to the Fe cation binding site.

Belongs to the polypeptide deformylase family. Fe(2+) is required as a cofactor.

It carries out the reaction N-terminal N-formyl-L-methionyl-[peptide] + H2O = N-terminal L-methionyl-[peptide] + formate. Functionally, removes the formyl group from the N-terminal Met of newly synthesized proteins. Requires at least a dipeptide for an efficient rate of reaction. N-terminal L-methionine is a prerequisite for activity but the enzyme has broad specificity at other positions. The sequence is that of Peptide deformylase from Thermus thermophilus (strain ATCC BAA-163 / DSM 7039 / HB27).